Consider the following 128-residue polypeptide: Putative pre-16S rRNA nuclease (128 aa).

Belongs to the YqgF nuclease family.

The protein localises to the cytoplasm. Its function is as follows. Could be a nuclease involved in processing of the 5'-end of pre-16S rRNA. This is Putative pre-16S rRNA nuclease from Campylobacter lari (strain RM2100 / D67 / ATCC BAA-1060).